A 194-amino-acid chain; its full sequence is 23 kDa U4/U6.U5 small nuclear ribonucleoprotein component (194 aa).

The C2H2-type zinc-finger motif lies at 80-104 (FYCDICNLTFKDTLQYIDHLNHKVH).

As to quaternary structure, component of the U4/U6-U5 tri-snRNP complex composed of the U4, U6 and U5 snRNAs and at least PRP3, PRP4, PRP6, PRP8, PRP18, PRP31, PRP38, SNU13, SNU23, SNU66, SNU114, SPP381, SMB1, SMD1, SMD2, SMD3, SMX2, SMX3, LSM2, LSM3, LSM4, LSM5, LSM6, LSM7, LSM8, BRR2 and DIB1.

It localises to the nucleus. Its function is as follows. Participates in pre-mRNA splicing. Part of the U4/U5/U6 tri-snRNP complex, one of the building blocks of the spliceosome. The protein is 23 kDa U4/U6.U5 small nuclear ribonucleoprotein component (SNU23) of Saccharomyces cerevisiae (strain ATCC 204508 / S288c) (Baker's yeast).